A 63-amino-acid polypeptide reads, in one-letter code: 2-hydroxymuconate tautomerase (63 aa).

The active-site Proton acceptor; via imino nitrogen is the Pro2.

This sequence belongs to the 4-oxalocrotonate tautomerase family. As to quaternary structure, homohexamer.

It catalyses the reaction (2Z,4E)-2-hydroxyhexa-2,4-dienedioate = (3E)-2-oxohex-3-enedioate. The protein operates within aromatic compound metabolism; salicylate degradation. In terms of biological role, catalyzes the ketonization of 2-hydroxymuconate stereoselectively to yield 2-oxo-3-hexenedioate. This is 2-hydroxymuconate tautomerase (nahJ) from Pseudomonas fluorescens.